Reading from the N-terminus, the 622-residue chain is Vacuolar protein sorting-associated protein 27 (622 aa).

The 132-residue stretch at 18–149 (SESIPNGDLD…KLISRGIKFP (132 aa)) folds into the VHS domain. Ser-157 is modified (phosphoserine). The FYVE-type; atypical zinc finger occupies 170 to 230 (WIDSDACMIC…VCDSCFEDYD (61 aa)). 8 residues coordinate Zn(2+): Cys-176, Cys-179, Cys-192, Cys-195, Cys-200, His-203, Cys-222, and Cys-225. Residues 236-260 (DSKKSKKHRHKRKKDRDYSTPEDEE) are disordered. Residues 239-249 (KSKKHRHKRKK) are compositionally biased toward basic residues. Positions 258-277 (DEEELIRKAIELSLKESRNS) constitute a UIM 1 domain. Lys-294 participates in a covalent cross-link: Glycyl lysine isopeptide (Lys-Gly) (interchain with G-Cter in ubiquitin). In terms of domain architecture, UIM 2 spans 301–320 (EEDPDLKAAIQESLREAEEA). A compositionally biased stretch (basic and acidic residues) spans 317-328 (AEEAKLRSERQK). 2 disordered regions span residues 317-348 (AEEA…IHSV) and 462-622 (AESY…LIEL). The span at 462 to 500 (AESYQTPPLQQLSSHQYKPQQDVSRQQSVKANSSPTTNI) shows a compositional bias: polar residues. Phosphoserine is present on Ser-495. Over residues 533 to 548 (EAEDEGTQAVQDEESS) the composition is skewed to acidic residues. Ser-613 bears the Phosphoserine mark.

Belongs to the VPS27 family. Component of the ESCRT-0 complex composed of HSE1 and VPS27. Interacts with ENT3 and ENT5, the ESCRT-I subunits VPS23 and VPS28 and with the COPIb subunits SEC27, SEC28 and SEC33. May form a complex composed of VPS27, HSE1 and DOA1. Interacts with DOA1. Interacts with ubiquitin.

The protein localises to the endosome membrane. Functionally, component of the ESCRT-0 complex which is the sorting receptor for ubiquitinated cargo proteins at the multivesicular body (MVB) and recruits ESCRT-I to the MVB outer membrane. Controls exit from the prevacuolar compartment (PVC) in both the forward direction to the vacuole and the return to the Golgi. Allows VPS10 to return to the (trans-Golgi network) TGN from the PVC. Might also function as an alternate adapter in the COPIb clathrin-like coat. The chain is Vacuolar protein sorting-associated protein 27 (VPS27) from Saccharomyces cerevisiae (strain ATCC 204508 / S288c) (Baker's yeast).